Consider the following 393-residue polypeptide: MVTVEEVRKAQRAEGPATILAIGTATPANCVNQSTYPDYYFRITNSEHKTELKEKFQRMCDKSMITKRYMHLTEEILKENPSFCEYMAPSLDARQDIAVVEVPKLGKEAAQSAIKEWGQPKSKITHVVFCTTSGVDMPGADYQLTKLLGLRPSVKRLMMYQQGCFAGGTVLRLAKDLAENNKGARVLIVCSEITVVTFRGPSETHLDSLVGQALFGDGAAAVIVGADPTPAEKPLFQLVSAAQTLAPNSCGAIDGHLREVGLTFHLLKDVPSVVSNNIEKCLFEAFNPLGISDWNSVFWIAHPGGPAILDQVEDKLGLKPEKLRATRHVLSEYGNMSSACVLFILDEMRKASSNAGLGTTGEGLEWGVLFGFGPGLTIETVVLHSVLIKPGPH.

C164 is an active-site residue.

Belongs to the thiolase-like superfamily. Chalcone/stilbene synthases family.

It carries out the reaction (E)-4-coumaroyl-CoA + 3 malonyl-CoA + 3 H(+) = 2',4,4',6'-tetrahydroxychalcone + 3 CO2 + 4 CoA. It participates in secondary metabolite biosynthesis; flavonoid biosynthesis. In terms of biological role, the primary product of this enzyme is 4,2',4',6'-tetrahydroxychalcone (also termed naringenin-chalcone or chalcone) which can under specific conditions spontaneously isomerize into naringenin. This Ipomoea batatas (Sweet potato) protein is Chalcone synthase DII (CHS-DII).